The primary structure comprises 101 residues: Fructose-bisphosphate aldolase (101 aa).

The active-site Schiff-base intermediate with dihydroxyacetone-P is lysine 11.

This sequence belongs to the class I fructose-bisphosphate aldolase family.

It carries out the reaction beta-D-fructose 1,6-bisphosphate = D-glyceraldehyde 3-phosphate + dihydroxyacetone phosphate. It functions in the pathway carbohydrate degradation; glycolysis; D-glyceraldehyde 3-phosphate and glycerone phosphate from D-glucose: step 4/4. The polypeptide is Fructose-bisphosphate aldolase (Lymnaea stagnalis (Great pond snail)).